A 188-amino-acid polypeptide reads, in one-letter code: Elongation factor P-like protein (188 aa).

It belongs to the elongation factor P family.

The polypeptide is Elongation factor P-like protein (Alcanivorax borkumensis (strain ATCC 700651 / DSM 11573 / NCIMB 13689 / SK2)).